An 81-amino-acid chain; its full sequence is Sulfur carrier protein TusA (81 aa).

C19 (cysteine persulfide intermediate) is an active-site residue.

This sequence belongs to the sulfur carrier protein TusA family.

It localises to the cytoplasm. Sulfur carrier protein which probably makes part of a sulfur-relay system. The protein is Sulfur carrier protein TusA of Shewanella denitrificans (strain OS217 / ATCC BAA-1090 / DSM 15013).